The primary structure comprises 478 residues: Protein nucleotidyltransferase YdiU (478 aa).

The ATP site is built by glycine 84, glycine 86, arginine 87, lysine 107, aspartate 119, glycine 120, arginine 170, and arginine 177. Residue aspartate 246 is the Proton acceptor of the active site. Residues asparagine 247 and aspartate 256 each contribute to the Mg(2+) site. Residue aspartate 256 participates in ATP binding.

The protein belongs to the SELO family. Requires Mg(2+) as cofactor. Mn(2+) is required as a cofactor.

The enzyme catalyses L-seryl-[protein] + ATP = 3-O-(5'-adenylyl)-L-seryl-[protein] + diphosphate. The catalysed reaction is L-threonyl-[protein] + ATP = 3-O-(5'-adenylyl)-L-threonyl-[protein] + diphosphate. It carries out the reaction L-tyrosyl-[protein] + ATP = O-(5'-adenylyl)-L-tyrosyl-[protein] + diphosphate. It catalyses the reaction L-histidyl-[protein] + UTP = N(tele)-(5'-uridylyl)-L-histidyl-[protein] + diphosphate. The enzyme catalyses L-seryl-[protein] + UTP = O-(5'-uridylyl)-L-seryl-[protein] + diphosphate. The catalysed reaction is L-tyrosyl-[protein] + UTP = O-(5'-uridylyl)-L-tyrosyl-[protein] + diphosphate. In terms of biological role, nucleotidyltransferase involved in the post-translational modification of proteins. It can catalyze the addition of adenosine monophosphate (AMP) or uridine monophosphate (UMP) to a protein, resulting in modifications known as AMPylation and UMPylation. The polypeptide is Protein nucleotidyltransferase YdiU (Escherichia coli O81 (strain ED1a)).